A 185-amino-acid polypeptide reads, in one-letter code: Lipopolysaccharide export system protein LptA (185 aa).

An N-terminal signal peptide occupies residues 1–27; it reads MKFKTNKLSLNLVLASSLLAASIPAFA. Positions 166–185 are disordered; it reads PSQLQDKNNKGQTPAQKKGN.

Belongs to the LptA family. As to quaternary structure, component of the lipopolysaccharide transport and assembly complex.

The protein localises to the periplasm. Involved in the assembly of lipopolysaccharide (LPS). Required for the translocation of LPS from the inner membrane to the outer membrane. May form a bridge between the inner membrane and the outer membrane, via interactions with LptC and LptD, thereby facilitating LPS transfer across the periplasm. The chain is Lipopolysaccharide export system protein LptA from Escherichia coli O157:H7.